The following is a 529-amino-acid chain: Hyaluronidase PH-20 (529 aa).

Residues 1 to 35 form the signal peptide; sequence MGAFTFKHSFFGSFVECSGVLQTVFIFLLIPCCLA. 2 disulfide bridges follow: Cys-59/Cys-351 and Cys-223/Cys-237. Asn-81 carries an N-linked (GlcNAc...) asparagine glycan. Catalysis depends on Glu-147, which acts as the Proton donor. N-linked (GlcNAc...) asparagine glycosylation is found at Asn-165 and Asn-179. N-linked (GlcNAc...) asparagine glycosylation is found at Asn-253 and Asn-368. Cystine bridges form between Cys-376–Cys-387, Cys-381–Cys-435, and Cys-437–Cys-464. Residue Asn-401 is glycosylated (N-linked (GlcNAc...) asparagine). The tract at residues 478 to 502 is disordered; sequence DEPPITDDTSQNQDSISDITSSAPP. Polar residues predominate over residues 487–502; it reads SQNQDSISDITSSAPP. Ser-492 carries the GPI-anchor amidated serine lipid modification. A propeptide spans 493 to 529 (removed in mature form); it reads ISDITSSAPPSSHILPKDLSWCLFLLSIFSQHWKYLL.

The protein belongs to the glycosyl hydrolase 56 family. Endoproteolysis (toward the C-terminus producing two disulfide-linked fragments) could activate PH-20. In terms of tissue distribution, testis.

The protein localises to the cell membrane. It catalyses the reaction Random hydrolysis of (1-&gt;4)-linkages between N-acetyl-beta-D-glucosamine and D-glucuronate residues in hyaluronate.. Its function is as follows. Involved in sperm-egg adhesion. Upon fertilization sperm must first penetrate a layer of cumulus cells that surrounds the egg before reaching the zona pellucida. The cumulus cells are embedded in a matrix containing hyaluronic acid which is formed prior to ovulation. This protein aids in penetrating the layer of cumulus cells by digesting hyaluronic acid. This Cavia porcellus (Guinea pig) protein is Hyaluronidase PH-20 (SPAM1).